Consider the following 457-residue polypeptide: Tubulin alpha chain (457 aa).

GTP-binding residues include Gln-12, Glu-77, Ser-146, Gly-150, Thr-151, Thr-186, Asn-213, and Asn-235. Glu-77 provides a ligand contact to Mg(2+).

It belongs to the tubulin family. In terms of assembly, dimer of alpha and beta chains. A typical microtubule is a hollow water-filled tube with an outer diameter of 25 nm and an inner diameter of 15 nM. Alpha-beta heterodimers associate head-to-tail to form protofilaments running lengthwise along the microtubule wall with the beta-tubulin subunit facing the microtubule plus end conferring a structural polarity. Microtubules usually have 13 protofilaments but different protofilament numbers can be found in some organisms and specialized cells. Mg(2+) is required as a cofactor. In terms of processing, undergoes a tyrosination/detyrosination cycle, the cyclic removal and re-addition of a C-terminal tyrosine residue by the enzymes tubulin tyrosine carboxypeptidase (TTCP) and tubulin tyrosine ligase (TTL), respectively.

The protein resides in the cytoplasm. The protein localises to the cytoskeleton. The enzyme catalyses GTP + H2O = GDP + phosphate + H(+). Its function is as follows. Tubulin is the major constituent of microtubules, a cylinder consisting of laterally associated linear protofilaments composed of alpha- and beta-tubulin heterodimers. Microtubules grow by the addition of GTP-tubulin dimers to the microtubule end, where a stabilizing cap forms. Below the cap, tubulin dimers are in GDP-bound state, owing to GTPase activity of alpha-tubulin. The polypeptide is Tubulin alpha chain (tubA) (Dictyostelium discoideum (Social amoeba)).